We begin with the raw amino-acid sequence, 91 residues long: MTDVLVVVKVFPESDEVNLDNLYEEIGKKLPAGYKLVRKETEPIAYGLKALIAYVQMPENVEGGTDTLEEIINSIQGVSHAEVVGITRLGF.

This sequence belongs to the EF-1-beta/EF-1-delta family.

Its function is as follows. Promotes the exchange of GDP for GTP in EF-1-alpha/GDP, thus allowing the regeneration of EF-1-alpha/GTP that could then be used to form the ternary complex EF-1-alpha/GTP/AAtRNA. The protein is Elongation factor 1-beta of Sulfurisphaera tokodaii (strain DSM 16993 / JCM 10545 / NBRC 100140 / 7) (Sulfolobus tokodaii).